Consider the following 426-residue polypeptide: Histidinol dehydrogenase (426 aa).

Residues tyrosine 123, glutamine 185, and asparagine 208 each coordinate NAD(+). Serine 231, glutamine 253, and histidine 256 together coordinate substrate. The Zn(2+) site is built by glutamine 253 and histidine 256. Active-site proton acceptor residues include glutamate 321 and histidine 322. Substrate is bound by residues histidine 322, aspartate 355, glutamate 409, and histidine 414. Residue aspartate 355 coordinates Zn(2+). Residue histidine 414 participates in Zn(2+) binding.

This sequence belongs to the histidinol dehydrogenase family. Requires Zn(2+) as cofactor.

The enzyme catalyses L-histidinol + 2 NAD(+) + H2O = L-histidine + 2 NADH + 3 H(+). The protein operates within amino-acid biosynthesis; L-histidine biosynthesis; L-histidine from 5-phospho-alpha-D-ribose 1-diphosphate: step 9/9. In terms of biological role, catalyzes the sequential NAD-dependent oxidations of L-histidinol to L-histidinaldehyde and then to L-histidine. The polypeptide is Histidinol dehydrogenase (Bacillus licheniformis (strain ATCC 14580 / DSM 13 / JCM 2505 / CCUG 7422 / NBRC 12200 / NCIMB 9375 / NCTC 10341 / NRRL NRS-1264 / Gibson 46)).